Here is a 1798-residue protein sequence, read N- to C-terminus: Non-reducing polyketide synthase nscA (1798 aa).

The N-terminal acylcarrier protein transacylase domain (SAT) stretch occupies residues 25-256; the sequence is RRLDQHSKDR…PLPVYDGLCH (232 aa). Residues 392–825 form the Ketosynthase family 3 (KS3) domain; that stretch reads SSKLAIVGMA…GGNTTLLLED (434 aa). Residues Cys-565, His-700, and His-743 each act as for beta-ketoacyl synthase activity in the active site. Residues 931–1224 form a malonyl-CoA:ACP transacylase (MAT) domain region; the sequence is FTGQGAYYHG…LVRSMIPSAP (294 aa). The tract at residues 1322–1458 is N-terminal hotdog fold; the sequence is HQITAETVRT…ATILFEDPGA (137 aa). Residues 1322-1632 form the PKS/mFAS DH domain; the sequence is HQITAETVRT…FRRVPRLLMD (311 aa). Catalysis depends on His-1354, which acts as the Proton acceptor; for dehydratase activity. The segment at 1390-1628 is product template (PT) domain; sequence HMNLTDVEVL…GMIRFRRVPR (239 aa). Residues 1486-1632 form a C-terminal hotdog fold region; it reads ASRLSKPLAY…FRRVPRLLMD (147 aa). The active-site Proton donor; for dehydratase activity is the Asp-1543. Residues 1695–1721 are disordered; it reads LLATSSGDSTPKEPPIVTPAESERAGP. The Carrier domain maps to 1721-1798; it reads PVDNNMISQC…EMTAWIEEYC (78 aa). The residue at position 1758 (Ser-1758) is an O-(pantetheine 4'-phosphoryl)serine.

It depends on pantetheine 4'-phosphate as a cofactor.

It participates in secondary metabolite biosynthesis. Functionally, non-reducing polyketide synthase; part of the gene cluster that mediates the biosynthesis of neosartoricin B, a prenylated anthracenone that probably exhibits T-cell antiproliferative activity, suggestive of a physiological role as an immunosuppressive agent. The non-reducing polyketide synthase nscA probably synthesizes and cyclizes the decaketide backbone. The hydrolase nscB then mediates the product release through hydrolysis followed by spontaneous decarboxylation. The prenyltransferase nscD catalyzes the addition of the dimethylallyl group to the aromatic C5. The FAD-dependent monooxygenase nscC is then responsible for the stereospecific hydroxylation at C2. Neosartoricin B can be converted into two additional compounds neosartoricins C and D. Neosartoricin C is a spirocyclic compound that is cyclized through the attack of C3 hydroxyl on C14, followed by dehydration. On the other hand, neosartoricin D is a further cyclized compound in which attack of C2 on C14 in neosartoricin C results in the formation of the acetal-containing dioxabicyclo-octanone ring. Both of these compounds are novel and possibly represent related metabolites of the gene cluster. The polypeptide is Non-reducing polyketide synthase nscA (Trichophyton rubrum (strain ATCC MYA-4607 / CBS 118892) (Athlete's foot fungus)).